Here is a 125-residue protein sequence, read N- to C-terminus: Protein ApaG (125 aa).

Residues 1–125 form the ApaG domain; the sequence is MINSPRVCVQ…FRLAVPTLIH (125 aa).

This Klebsiella pneumoniae (strain 342) protein is Protein ApaG.